We begin with the raw amino-acid sequence, 845 residues long: Beta-mannosidase B (845 aa).

Residue glutamate 432 is the Proton donor of the active site. N-linked (GlcNAc...) asparagine glycosylation is found at asparagine 717 and asparagine 723.

Belongs to the glycosyl hydrolase 2 family. Beta-mannosidase B subfamily.

The catalysed reaction is Hydrolysis of terminal, non-reducing beta-D-mannose residues in beta-D-mannosides.. The protein operates within glycan metabolism; N-glycan degradation. In terms of biological role, exoglycosidase that cleaves the single beta-linked mannose residue from the non-reducing end of beta-mannosidic oligosaccharides of various complexity and length. Prefers mannobiose over mannotriose and has no activity against polymeric mannan. Is also severely restricted by galactosyl substitutions at the +1 subsite. The protein is Beta-mannosidase B (mndB) of Aspergillus clavatus (strain ATCC 1007 / CBS 513.65 / DSM 816 / NCTC 3887 / NRRL 1 / QM 1276 / 107).